Reading from the N-terminus, the 713-residue chain is Forkhead box protein P2 (713 aa).

Positions 1-28 (MMQESVTETISNSSMNQNGMSTLSSQLD) are enriched in polar residues. Disordered regions lie at residues 1-44 (MMQE…SSEV) and 279-337 (DNGI…TGAS). A compositionally biased stretch (low complexity) spans 290 to 303 (TTNNSSSTTSSTTS). The segment covering 313 to 322 (SIVNGQSSVL) has biased composition (polar residues). Residues 324 to 335 (ARRDSSSHEETG) show a composition bias toward basic and acidic residues. The C2H2-type zinc-finger motif lies at 344-369 (GVCKWPGCESICEDFGQFLKHLNNEH). The segment at 386 to 407 (VQQLEIQLSKERERLQAMMTHL) is leucine-zipper. The tract at residues 420–424 (PLNLV) is CTBP1-binding. A compositionally biased stretch (low complexity) spans 436-457 (TSPQSLPQTPTTPTAPVTPITQ). Residues 436–463 (TSPQSLPQTPTTPTAPVTPITQGPSVIT) are disordered. A DNA-binding region (fork-head) is located at residues 502-592 (RPPFTYATLI…SQKITGSPTL (91 aa)). Disordered regions lie at residues 647–666 (LDHI…QPHI) and 676–713 (VIAE…EDLE). The segment covering 697 to 713 (LEDDREIEEEPLSEDLE) has biased composition (acidic residues).

As to quaternary structure, forms homodimers and heterodimers with FOXP1 and FOXP4. Dimerization is required for DNA-binding. Interacts with CTBP1. Interacts with FOXP1. Interacts with TBR1. Interacts with ZMYM2.

The protein localises to the nucleus. In terms of biological role, transcriptional repressor that may play a role in the specification and differentiation of lung epithelium. May also play a role in developing neural, gastrointestinal and cardiovascular tissues. Can act with CTBP1 to synergistically repress transcription but CTPBP1 is not essential. Plays a role in synapse formation by regulating SRPX2 levels. The polypeptide is Forkhead box protein P2 (FOXP2) (Pongo pygmaeus (Bornean orangutan)).